The primary structure comprises 404 residues: MSQQALADKPLLSRGMIAVLCAQFFSAFGDNALLFATLALIKQQLYPDWSQPILQMAFVATYIVLAPFVGQFADSFAKGRVMMVANGLKLAGALVICFGFNPFLGYSLVGVGAAAYSPAKYGILGEITSGEQLVKANGMMEASTIAAILLGSVAGGVLADWHLGVALGVCALVYAIAVVANMFIPKLAAARSGSSWRPRAMTGSFFTACLVLWRDGEARFSLAGTSLFWGAGVTLRFLLVLWVPIALGITDNATPTLLNAMVAIGIVVGAGAAARFVTLKTVKRCLPAGVLIGVAVAIFALQHSMPMAYLLLIIIGILGGFFVVPLNALLQERGKNSVGAGNAIAVQNLGENTAMLLMLGLFSVVVKLGVPVIAVGVGFGVIFALAIALLWGWQWRQQRQKTAE.

12 helical membrane passes run 16 to 36 (MIAV…LLFA), 53 to 73 (ILQM…GQFA), 91 to 111 (AGAL…LVGV), 139 to 159 (MMEA…GVLA), 164 to 184 (GVAL…NMFI), 195 to 213 (SWRP…LVLW), 227 to 247 (LFWG…PIAL), 253 to 273 (ATPT…AGAA), 285 to 305 (CLPA…QHSM), 310 to 330 (LLLI…NALL), 350 to 370 (GENT…KLGV), and 372 to 392 (VIAV…LLWG).

This sequence belongs to the major facilitator superfamily. LplT (TC 2.A.1.42) family.

The protein resides in the cell inner membrane. Catalyzes the facilitated diffusion of 2-acyl-glycero-3-phosphoethanolamine (2-acyl-GPE) into the cell. This Yersinia enterocolitica serotype O:8 / biotype 1B (strain NCTC 13174 / 8081) protein is Lysophospholipid transporter LplT.